Reading from the N-terminus, the 82-residue chain is MTFPRALTVIDDNGMVISIIFWLLLIIILILFSIALLNIIKLCMVCCNLGRTVVVIPVRHAYDAYKNFMRINAYNHNEALLV.

The Virion surface portion of the chain corresponds to 1–19; the sequence is MTFPRALTVIDDNGMVISI. The helical transmembrane segment at 20-40 threads the bilayer; that stretch reads IFWLLLIIILILFSIALLNII. Over 41 to 82 the chain is Intravirion; it reads KLCMVCCNLGRTVVVIPVRHAYDAYKNFMRINAYNHNEALLV.

Belongs to the alphacoronaviruses E protein family. As to quaternary structure, homopentamer. Interacts with membrane protein M in the budding compartment of the host cell, which is located between endoplasmic reticulum and the Golgi complex. Interacts with Nucleoprotein.

It localises to the host Golgi apparatus membrane. In terms of biological role, plays a central role in virus morphogenesis and assembly. Acts as a viroporin and self-assembles in host membranes forming pentameric protein-lipid pores that allow ion transport. Also plays a role in the induction of apoptosis. This Canine coronavirus (strain BGF10) (CCoV) protein is Envelope small membrane protein.